A 390-amino-acid chain; its full sequence is uncharacterized protein (390 aa).

The next 2 helical transmembrane spans lie at Gly27–Ile47 and Phe356–Phe376.

Belongs to the ERGIC family.

The protein resides in the membrane. This is an uncharacterized protein from Schizosaccharomyces pombe (strain 972 / ATCC 24843) (Fission yeast).